We begin with the raw amino-acid sequence, 71 residues long: Small ribosomal subunit protein bS21 (71 aa).

It belongs to the bacterial ribosomal protein bS21 family.

This is Small ribosomal subunit protein bS21 from Buchnera aphidicola subsp. Baizongia pistaciae (strain Bp).